The primary structure comprises 289 residues: UDP-3-O-acyl-N-acetylglucosamine deacetylase (289 aa).

The Zn(2+) site is built by His-79, His-236, and Asp-240. The active-site Proton donor is the His-263.

Belongs to the LpxC family. Zn(2+) serves as cofactor.

The catalysed reaction is a UDP-3-O-[(3R)-3-hydroxyacyl]-N-acetyl-alpha-D-glucosamine + H2O = a UDP-3-O-[(3R)-3-hydroxyacyl]-alpha-D-glucosamine + acetate. The protein operates within glycolipid biosynthesis; lipid IV(A) biosynthesis; lipid IV(A) from (3R)-3-hydroxytetradecanoyl-[acyl-carrier-protein] and UDP-N-acetyl-alpha-D-glucosamine: step 2/6. Its function is as follows. Catalyzes the hydrolysis of UDP-3-O-myristoyl-N-acetylglucosamine to form UDP-3-O-myristoylglucosamine and acetate, the committed step in lipid A biosynthesis. The protein is UDP-3-O-acyl-N-acetylglucosamine deacetylase of Rickettsia typhi (strain ATCC VR-144 / Wilmington).